The sequence spans 349 residues: Dihydroorotate dehydrogenase (quinone) (349 aa).

FMN-binding positions include 65–69 (AGFDK) and Ala89. Lys69 is a binding site for substrate. 114–118 (NRMGF) contacts substrate. FMN contacts are provided by Asn143 and Asn176. Asn176 lines the substrate pocket. Residue Ser179 is the Nucleophile of the active site. Substrate is bound at residue Asn181. Lys212 and Thr240 together coordinate FMN. 241-242 (NT) serves as a coordination point for substrate. The disordered stretch occupies residues 244–265 (TERPESLSHPHAGEQGGLSGAP). Residues 245 to 255 (ERPESLSHPHA) show a composition bias toward basic and acidic residues. Residues Gly263, Gly290, and 311 to 312 (YT) each bind FMN.

The protein belongs to the dihydroorotate dehydrogenase family. Type 2 subfamily. Monomer. It depends on FMN as a cofactor.

It localises to the cell membrane. It carries out the reaction (S)-dihydroorotate + a quinone = orotate + a quinol. The protein operates within pyrimidine metabolism; UMP biosynthesis via de novo pathway; orotate from (S)-dihydroorotate (quinone route): step 1/1. Its function is as follows. Catalyzes the conversion of dihydroorotate to orotate with quinone as electron acceptor. The polypeptide is Dihydroorotate dehydrogenase (quinone) (Halobacterium salinarum (strain ATCC 29341 / DSM 671 / R1)).